The primary structure comprises 391 residues: Putative 12-oxophytodienoate reductase 6 (391 aa).

Residues 42-44 (PMT), Ala-75, and Gln-117 each bind FMN. 189–192 (HGAN) is a substrate binding site. Catalysis depends on Tyr-194, which acts as the Proton donor. FMN is bound at residue Arg-241. A substrate-binding site is contributed by Arg-282. FMN-binding positions include Gly-312 and 333–334 (GR). Residues 372–391 (YPFLDEHHHDDDDDSNAPSA) form a disordered region. Residues 382 to 391 (DDDDSNAPSA) show a composition bias toward acidic residues.

Belongs to the NADH:flavin oxidoreductase/NADH oxidase family. The cofactor is FMN.

Functionally, putative oxophytodienoate reductase that may be involved in the biosynthesis or metabolism of oxylipin signaling molecules. The protein is Putative 12-oxophytodienoate reductase 6 (OPR6) of Oryza sativa subsp. japonica (Rice).